Reading from the N-terminus, the 739-residue chain is Protein kinase C (739 aa).

The C2 domain maps to 1-117 (MFTGKLQIKV…SETAVQDLWV (117 aa)). 2 consecutive Phorbol-ester/DAG-type zinc fingers follow at residues 176–226 (GHKF…VSKC) and 251–301 (PHRF…ANTC). Residues 408–665 (FNFIKVLGKG…ENEIRKHPFF (258 aa)) form the Protein kinase domain. Residues 414 to 422 (LGKGSFGKV) and K437 each bind ATP. D532 (proton acceptor) is an active-site residue. Residues 666–737 (AKLDWKELEK…VNPKFGPERK (72 aa)) enclose the AGC-kinase C-terminal domain.

Belongs to the protein kinase superfamily. AGC Ser/Thr protein kinase family. PKC subfamily.

The catalysed reaction is L-seryl-[protein] + ATP = O-phospho-L-seryl-[protein] + ADP + H(+). The enzyme catalyses L-threonyl-[protein] + ATP = O-phospho-L-threonyl-[protein] + ADP + H(+). Functionally, PKC is activated by diacylglycerol which in turn phosphorylates a range of cellular proteins. PKC also serves as the receptor for phorbol esters, a class of tumor promoters. This is Protein kinase C (Pkc98E) from Drosophila melanogaster (Fruit fly).